A 352-amino-acid chain; its full sequence is N-acetyl-gamma-glutamyl-phosphate reductase (352 aa).

Cysteine 155 is a catalytic residue.

This sequence belongs to the NAGSA dehydrogenase family. Type 1 subfamily.

It is found in the cytoplasm. It catalyses the reaction N-acetyl-L-glutamate 5-semialdehyde + phosphate + NADP(+) = N-acetyl-L-glutamyl 5-phosphate + NADPH + H(+). Its pathway is amino-acid biosynthesis; L-arginine biosynthesis; N(2)-acetyl-L-ornithine from L-glutamate: step 3/4. In terms of biological role, catalyzes the NADPH-dependent reduction of N-acetyl-5-glutamyl phosphate to yield N-acetyl-L-glutamate 5-semialdehyde. In Crocosphaera subtropica (strain ATCC 51142 / BH68) (Cyanothece sp. (strain ATCC 51142)), this protein is N-acetyl-gamma-glutamyl-phosphate reductase.